Consider the following 144-residue polypeptide: MLQPKKTKFRRQQKGRAKGNAQRGNQLAFGSFGIKALETKWITGRQIEAARIAVTRYMQRQGQIWIRIFPDKPITRKPADVRMGKGKGAPEGFVAPVTPGRIIIEAEGVSYEIAKEALRLAAQKLPITTKFVVRRDYDIQNQNA.

The span at 1 to 17 shows a compositional bias: basic residues; sequence MLQPKKTKFRRQQKGRA. The interval 1-22 is disordered; sequence MLQPKKTKFRRQQKGRAKGNAQ.

The protein belongs to the universal ribosomal protein uL16 family. Part of the 50S ribosomal subunit.

Functionally, binds 23S rRNA and is also seen to make contacts with the A and possibly P site tRNAs. This Bacteroides thetaiotaomicron (strain ATCC 29148 / DSM 2079 / JCM 5827 / CCUG 10774 / NCTC 10582 / VPI-5482 / E50) protein is Large ribosomal subunit protein uL16.